The primary structure comprises 141 residues: Nucleoside diphosphate kinase (141 aa).

Positions 11, 59, 87, 93, 104, and 114 each coordinate ATP. Catalysis depends on His117, which acts as the Pros-phosphohistidine intermediate.

It belongs to the NDK family. In terms of assembly, homotetramer. Mg(2+) serves as cofactor.

Its subcellular location is the cytoplasm. The catalysed reaction is a 2'-deoxyribonucleoside 5'-diphosphate + ATP = a 2'-deoxyribonucleoside 5'-triphosphate + ADP. It catalyses the reaction a ribonucleoside 5'-diphosphate + ATP = a ribonucleoside 5'-triphosphate + ADP. In terms of biological role, major role in the synthesis of nucleoside triphosphates other than ATP. The ATP gamma phosphate is transferred to the NDP beta phosphate via a ping-pong mechanism, using a phosphorylated active-site intermediate. The protein is Nucleoside diphosphate kinase of Pseudomonas fluorescens (strain SBW25).